Here is a 293-residue protein sequence, read N- to C-terminus: Protease HtpX homolog (293 aa).

The next 2 helical transmembrane spans lie at 4–24 (VILF…TLRI) and 40–60 (ALLM…LLIS). Zn(2+) is bound at residue histidine 146. Glutamate 147 is a catalytic residue. Residue histidine 150 participates in Zn(2+) binding. Helical transmembrane passes span 161–181 (LIQG…GYFV) and 198–218 (VTVI…VAWF). Glutamate 223 contacts Zn(2+).

This sequence belongs to the peptidase M48B family. It depends on Zn(2+) as a cofactor.

Its subcellular location is the cell inner membrane. This Bordetella avium (strain 197N) protein is Protease HtpX homolog.